Reading from the N-terminus, the 239-residue chain is MTIVKKVARLRDWIALKTGAIRSPMIAEVSGYAARFTVQSVEEIWRIRDLRGEQDVIRLLLEEAEEDDVLWDVGSNIGTHACICSTKANVFAFEPNPDTFDRLTENSDRAPGTVIPLRYGLSSSSGDISFEPSPIAANGTHKVSTEGSMTIKTISGDELVESGEVPKPNVVKVDVEGHELEVLKGMTNALQSVNFVIVEIHAGVDPKDVTKLLSEAKLSTEITKLNRDEDFVIGRRQND.

Belongs to the FkbM methyltransferase family.

The protein resides in the cytoplasm. The protein operates within cell surface structure biogenesis; S-layer biogenesis. Functionally, involved in the assembly of a N-linked pentasaccharide that decorates the S-layer glycoprotein and flagellins. S-adenosyl-L-methionine-dependent methyltransferase that modifies the hexuronic acid found at position 4 of the pentasaccharide. The sequence is that of Hexuronic acid methyltransferase AglP (aglP) from Haloferax volcanii (strain ATCC 29605 / DSM 3757 / JCM 8879 / NBRC 14742 / NCIMB 2012 / VKM B-1768 / DS2) (Halobacterium volcanii).